We begin with the raw amino-acid sequence, 63 residues long: Large ribosomal subunit protein uL30 (63 aa).

The protein belongs to the universal ribosomal protein uL30 family. Part of the 50S ribosomal subunit.

The polypeptide is Large ribosomal subunit protein uL30 (Rickettsia canadensis (strain McKiel)).